Here is a 203-residue protein sequence, read N- to C-terminus: Large ribosomal subunit protein bL25 (203 aa).

It belongs to the bacterial ribosomal protein bL25 family. CTC subfamily. As to quaternary structure, part of the 50S ribosomal subunit; part of the 5S rRNA/L5/L18/L25 subcomplex. Contacts the 5S rRNA. Binds to the 5S rRNA independently of L5 and L18.

Functionally, this is one of the proteins that binds to the 5S RNA in the ribosome where it forms part of the central protuberance. This is Large ribosomal subunit protein bL25 from Psychromonas ingrahamii (strain DSM 17664 / CCUG 51855 / 37).